Consider the following 136-residue polypeptide: Probable acyltransferase SID5 (136 aa).

It participates in siderophore biosynthesis. In terms of biological role, probable acyltransferase; part of the gene cluster that mediates the biosynthesis of hydroxamate-containing siderophores that play a critical role in virulence via intracellular iron acquisition during macrophage infection. This Ajellomyces capsulatus (Darling's disease fungus) protein is Probable acyltransferase SID5.